Consider the following 283-residue polypeptide: MTKLITTVKEMQHIVKAAKRSGTTIGFIPTMGALHDGHLTMVRESVSTNDITIVSVFVNPLQFGPNEDFDAYPRQIDKDLELVSEVGADIVFHPAVEDMYPGELGIDVKVGPLADVLEGAKRPGHFDGVVTVVNKLFNIVMPDYAYFGKKDAQQLAIVEQMVKDFNHAVEIIGIDIVREADGLAKSSRNVYLTEQERQEAVHLSKSLLLAQALYQDGERQSKVIIDRVTEYLESHISGRIEEVAVYSYPQLVEQHEITGRIFISLAVKFSKARLIDNIIIGAE.

31–38 (MGALHDGH) serves as a coordination point for ATP. H38 acts as the Proton donor in catalysis. A (R)-pantoate-binding site is contributed by Q62. Q62 is a binding site for beta-alanine. 148-151 (GKKD) contributes to the ATP binding site. A (R)-pantoate-binding site is contributed by Q154. ATP is bound by residues V177 and 185-188 (KSSR).

Belongs to the pantothenate synthetase family. In terms of assembly, homodimer.

Its subcellular location is the cytoplasm. The enzyme catalyses (R)-pantoate + beta-alanine + ATP = (R)-pantothenate + AMP + diphosphate + H(+). It participates in cofactor biosynthesis; (R)-pantothenate biosynthesis; (R)-pantothenate from (R)-pantoate and beta-alanine: step 1/1. Its function is as follows. Catalyzes the condensation of pantoate with beta-alanine in an ATP-dependent reaction via a pantoyl-adenylate intermediate. The chain is Pantothenate synthetase from Staphylococcus aureus (strain USA300).